A 119-amino-acid polypeptide reads, in one-letter code: uncharacterized protein (119 aa).

The interval 55–119 is disordered; it reads LSTEPPTPPS…SRLPPRSWTN (65 aa). The segment covering 81-92 has biased composition (polar residues); that stretch reads LSYTRCHSTTYT.

This is an uncharacterized protein from Saccharomyces cerevisiae (strain ATCC 204508 / S288c) (Baker's yeast).